Here is a 398-residue protein sequence, read N- to C-terminus: MKKIMAINAGSSSLKFQLFEMPEEKVLTKGLVERIGLPNSIFTISVNGEKITQTLDIKNHEQAVDMMLDEMKKHGIIQDINDLDGTGHRVVQGGDIFETSALVTDEVEKQIEELCELAPLHNPANLMGIRAFRKMLPNIPHVAIFDTSFHTTMPEEAFLYSLPYKYYQDYGIRKYGAHGTSHKFVAERAAELLDRPIEQLRIITCHIGNGASIAAVEGGKSVDTSMGFTPLAGVTMGTRSGNLDPAIIPFLMEKTGKTAQEVINVLNKESGLLGISGISSDLRDIEQKAEEGDERAILALDVFASRIHKYIGSYATRMKGLDAIVFTAGVGENSDIVRARVLEGLEFMGVYWDPKLNAGLRGKEAFINYPHSPVKVMVIPTDEEVMIARDTMTFGNLK.

Position 8 (asparagine 8) interacts with Mg(2+). Lysine 15 is an ATP binding site. Substrate is bound at residue arginine 89. Residue aspartate 146 is the Proton donor/acceptor of the active site. ATP is bound by residues 206 to 210, 281 to 283, and 329 to 333; these read HIGNG, DLR, and GVGEN. Mg(2+) is bound at residue glutamate 383.

It belongs to the acetokinase family. Homodimer. It depends on Mg(2+) as a cofactor. Mn(2+) is required as a cofactor.

The protein localises to the cytoplasm. It carries out the reaction acetate + ATP = acetyl phosphate + ADP. The protein operates within metabolic intermediate biosynthesis; acetyl-CoA biosynthesis; acetyl-CoA from acetate: step 1/2. Functionally, catalyzes the formation of acetyl phosphate from acetate and ATP. Can also catalyze the reverse reaction. This chain is Acetate kinase, found in Macrococcus caseolyticus (strain JCSC5402) (Macrococcoides caseolyticum).